The primary structure comprises 231 residues: MSKNILVLGGSGALGAEVVKFFKSKSWNTISIDFRENPNADHSFTIKDSGEEEIKSVIEKINSKSIKVDTFVCAAGGWSGGNASSDEFLKSVKGMIDMNLYSAFASAHIGAKLLNQGGLFVLTGASAALNRTSGMIAYGATKAATHHIIKDLASENGGLPAGSTSLGILPVTLDTPTNRKYMSDANFDDWTPLSEVAEKLFEWSTNSDSRPTNGSLVKFETKSKVTTWTNL.

6 to 30 provides a ligand contact to NADP(+); sequence LVLGGSGALGAEVVKFFKSKSWNTI. Residue tyrosine 138 is the Proton acceptor of the active site.

This sequence belongs to the short-chain dehydrogenases/reductases (SDR) family. As to quaternary structure, homodimer.

The catalysed reaction is 5,6,7,8-tetrahydropteridine + NAD(+) = 6,7-dihydropteridine + NADH + H(+). The enzyme catalyses 5,6,7,8-tetrahydropteridine + NADP(+) = 6,7-dihydropteridine + NADPH + H(+). The product of this enzyme, tetrahydrobiopterin (BH-4), is an essential cofactor for phenylalanine, tyrosine, and tryptophan hydroxylases. In Dictyostelium discoideum (Social amoeba), this protein is Dihydropteridine reductase (qdpr).